A 280-amino-acid polypeptide reads, in one-letter code: uncharacterized protein (280 aa).

The first 35 residues, 1–35 (MQGQVLKKVLKKYVHIGMCTLFLHAILLFPCVAQA), serve as a signal peptide directing secretion.

This is an uncharacterized protein from Treponema pallidum (strain Nichols).